Reading from the N-terminus, the 518-residue chain is 2,3-bisphosphoglycerate-independent phosphoglycerate mutase (518 aa).

Residues Asp-14 and Ser-64 each coordinate Mn(2+). Ser-64 functions as the Phosphoserine intermediate in the catalytic mechanism. Substrate is bound by residues His-125, Arg-155–Asp-156, Arg-187, Arg-193, Arg-264–Arg-267, and Lys-337. The Mn(2+) site is built by Asp-404, His-408, Asp-445, His-446, and His-467.

The protein belongs to the BPG-independent phosphoglycerate mutase family. Mn(2+) is required as a cofactor.

It carries out the reaction (2R)-2-phosphoglycerate = (2R)-3-phosphoglycerate. It functions in the pathway carbohydrate degradation; glycolysis; pyruvate from D-glyceraldehyde 3-phosphate: step 3/5. In terms of biological role, catalyzes the interconversion of 2-phosphoglycerate and 3-phosphoglycerate. The polypeptide is 2,3-bisphosphoglycerate-independent phosphoglycerate mutase (Methanococcoides burtonii (strain DSM 6242 / NBRC 107633 / OCM 468 / ACE-M)).